A 224-amino-acid polypeptide reads, in one-letter code: uncharacterized protein (224 aa).

In terms of biological role, the presence of the two linear plasmids, termed pGKL1 and pGKL2, in strains of Kluyveromyces lactis confers the killer phenotype to the host cell, by promoting the secretion of a toxin able to inhibit the growth of sensitive strains. This is an uncharacterized protein from Kluyveromyces lactis (strain ATCC 8585 / CBS 2359 / DSM 70799 / NBRC 1267 / NRRL Y-1140 / WM37) (Yeast).